Here is a 154-residue protein sequence, read N- to C-terminus: Large ribosomal subunit protein uL30 (154 aa).

The tract at residues 114–139 (PVLRLHPPRGGHRGQKHPTAEGGQIG) is disordered. The span at 119-129 (HPPRGGHRGQK) shows a compositional bias: basic residues.

Belongs to the universal ribosomal protein uL30 family. In terms of assembly, part of the 50S ribosomal subunit.

In Haloquadratum walsbyi (strain DSM 16790 / HBSQ001), this protein is Large ribosomal subunit protein uL30.